A 512-amino-acid chain; its full sequence is Serine palmitoyltransferase 3 (512 aa).

Position 345 is an N6-(pyridoxal phosphate)lysine (lysine 345).

This sequence belongs to the class-II pyridoxal-phosphate-dependent aminotransferase family. In terms of assembly, heterodimer of sptl-1/sptl-3. Pyridoxal 5'-phosphate serves as cofactor.

The enzyme catalyses L-serine + hexadecanoyl-CoA + H(+) = 3-oxosphinganine + CO2 + CoA. It functions in the pathway lipid metabolism; sphingolipid metabolism. Functionally, component of the serine palmitoyltransferase (SPT) that catalyzes the first committed step in sphingolipid biosynthesis, which is the condensation of an acyl-CoA species and L-serine. The catalytic core is composed of a heterodimer of sptl-1 and sptl-2 or sptl-1 and sptl-3. Required for the specification of abicobasal polarity and development of the gut lumen. The protein is Serine palmitoyltransferase 3 (sptl-3) of Caenorhabditis elegans.